Here is a 170-residue protein sequence, read N- to C-terminus: Acireductone dioxygenase (170 aa).

Fe(2+) contacts are provided by His99, His101, Glu105, and His144. His99, His101, Glu105, and His144 together coordinate Ni(2+).

Belongs to the acireductone dioxygenase (ARD) family. As to quaternary structure, monomer. Fe(2+) is required as a cofactor. The cofactor is Ni(2+).

It catalyses the reaction 1,2-dihydroxy-5-(methylsulfanyl)pent-1-en-3-one + O2 = 3-(methylsulfanyl)propanoate + CO + formate + 2 H(+). The enzyme catalyses 1,2-dihydroxy-5-(methylsulfanyl)pent-1-en-3-one + O2 = 4-methylsulfanyl-2-oxobutanoate + formate + 2 H(+). It functions in the pathway amino-acid biosynthesis; L-methionine biosynthesis via salvage pathway; L-methionine from S-methyl-5-thio-alpha-D-ribose 1-phosphate: step 5/6. In terms of biological role, catalyzes 2 different reactions between oxygen and the acireductone 1,2-dihydroxy-3-keto-5-methylthiopentene (DHK-MTPene) depending upon the metal bound in the active site. Fe-containing acireductone dioxygenase (Fe-ARD) produces formate and 2-keto-4-methylthiobutyrate (KMTB), the alpha-ketoacid precursor of methionine in the methionine recycle pathway. Ni-containing acireductone dioxygenase (Ni-ARD) produces methylthiopropionate, carbon monoxide and formate, and does not lie on the methionine recycle pathway. This is Acireductone dioxygenase from Bacillus thuringiensis subsp. konkukian (strain 97-27).